Here is a 150-residue protein sequence, read N- to C-terminus: Endoribonuclease YbeY (150 aa).

3 residues coordinate Zn(2+): His102, His106, and His112.

This sequence belongs to the endoribonuclease YbeY family. Zn(2+) serves as cofactor.

The protein resides in the cytoplasm. Single strand-specific metallo-endoribonuclease involved in late-stage 70S ribosome quality control and in maturation of the 3' terminus of the 16S rRNA. The chain is Endoribonuclease YbeY from Thermotoga petrophila (strain ATCC BAA-488 / DSM 13995 / JCM 10881 / RKU-1).